Reading from the N-terminus, the 154-residue chain is 20 kDa calcium-binding protein (154 aa).

EF-hand domains follow at residues 13–48 (DQVK…LNLT), 49–84 (VKPD…KLQE), 86–121 (QDER…LGDD), and 122–154 (LTEE…MTSE). Ca(2+) is bound by residues Asp62, Asp64, Thr66, Asp99, Asn101, Glu105, Asp110, Asp135, Asp137, Ser139, and Glu146.

The protein resides in the tegument membrane. Its function is as follows. Calcium-binding protein. The chain is 20 kDa calcium-binding protein (SM20) from Schistosoma mansoni (Blood fluke).